Here is a 220-residue protein sequence, read N- to C-terminus: Ribosomal RNA large subunit methyltransferase E (220 aa).

The S-adenosyl-L-methionine site is built by Gly-60, Trp-62, Asp-92, Asp-108, and Asp-133. Lys-173 serves as the catalytic Proton acceptor.

This sequence belongs to the class I-like SAM-binding methyltransferase superfamily. RNA methyltransferase RlmE family.

Its subcellular location is the cytoplasm. It carries out the reaction uridine(2552) in 23S rRNA + S-adenosyl-L-methionine = 2'-O-methyluridine(2552) in 23S rRNA + S-adenosyl-L-homocysteine + H(+). In terms of biological role, specifically methylates the uridine in position 2552 of 23S rRNA at the 2'-O position of the ribose in the fully assembled 50S ribosomal subunit. The protein is Ribosomal RNA large subunit methyltransferase E of Paraburkholderia xenovorans (strain LB400).